The following is a 91-amino-acid chain: uncharacterized protein (91 aa).

Residues 1–20 (MFSRVLALLAVLLLSANTWA) form the signal peptide.

This sequence belongs to the BhsA/McbA family.

Its subcellular location is the periplasm. This is an uncharacterized protein from Escherichia coli O157:H7.